Reading from the N-terminus, the 207-residue chain is Uracil phosphoribosyltransferase (207 aa).

5-phospho-alpha-D-ribose 1-diphosphate is bound by residues Arg77, Arg102, and 129–137 (DPMVATGGS). Uracil is bound by residues Ile192 and 197–199 (GDA). Asp198 contacts 5-phospho-alpha-D-ribose 1-diphosphate.

It belongs to the UPRTase family. Requires Mg(2+) as cofactor.

The enzyme catalyses UMP + diphosphate = 5-phospho-alpha-D-ribose 1-diphosphate + uracil. It functions in the pathway pyrimidine metabolism; UMP biosynthesis via salvage pathway; UMP from uracil: step 1/1. Allosterically activated by GTP. Its function is as follows. Catalyzes the conversion of uracil and 5-phospho-alpha-D-ribose 1-diphosphate (PRPP) to UMP and diphosphate. This is Uracil phosphoribosyltransferase from Mycobacterium bovis (strain ATCC BAA-935 / AF2122/97).